Reading from the N-terminus, the 218-residue chain is Dehydration-responsive element-binding protein 1B (218 aa).

Residues Met1–Arg26 form a disordered region. The segment at residues Val32–Ala95 is a DNA-binding region (AP2/ERF). The interval Ser131–Asn151 is disordered. Acidic residues predominate over residues Phe141–Asn151.

It belongs to the AP2/ERF transcription factor family. ERF subfamily.

The protein localises to the nucleus. Transcriptional activator that binds specifically to the DNA sequence 5'-[AG]CCGAC-3'. Binding to the C-repeat/DRE element mediates high salinity- and dehydration-inducible transcription. Confers resistance to high salt, cold and drought stress. This is Dehydration-responsive element-binding protein 1B (DREB1B) from Oryza sativa subsp. indica (Rice).